We begin with the raw amino-acid sequence, 805 residues long: Sucrose synthase (805 aa).

Positions 275-752 (MVFNVVILSP…GLQRIEEKYT (478 aa)) are GT-B glycosyltransferase.

This sequence belongs to the glycosyltransferase 1 family. Plant sucrose synthase subfamily.

It carries out the reaction an NDP-alpha-D-glucose + D-fructose = a ribonucleoside 5'-diphosphate + sucrose + H(+). Its function is as follows. Sucrose-cleaving enzyme that provides UDP-glucose and fructose for various metabolic pathways. The polypeptide is Sucrose synthase (SS1) (Vigna radiata var. radiata (Mung bean)).